The following is a 119-amino-acid chain: Acidic phospholipase A2 2 (119 aa).

Cystine bridges form between Cys11/Cys71, Cys26/Cys118, Cys28/Cys44, Cys43/Cys99, Cys50/Cys92, Cys60/Cys85, and Cys78/Cys90. Ca(2+)-binding residues include Tyr27, Gly29, and Gly31. The active site involves His47. Asp48 lines the Ca(2+) pocket. Residue Asp93 is part of the active site.

This sequence belongs to the phospholipase A2 family. Group I subfamily. D49 sub-subfamily. As to quaternary structure, homotrimer. Requires Ca(2+) as cofactor. As to expression, expressed by the venom gland.

The protein resides in the secreted. It carries out the reaction a 1,2-diacyl-sn-glycero-3-phosphocholine + H2O = a 1-acyl-sn-glycero-3-phosphocholine + a fatty acid + H(+). In terms of biological role, PLA2 catalyzes the calcium-dependent hydrolysis of the 2-acyl groups in 3-sn-phosphoglycerides. The protein is Acidic phospholipase A2 2 of Naja naja (Indian cobra).